The primary structure comprises 115 residues: MKKKHRIKKNDEFQTVFQKGKSNANRQFVVYQLDKAEQPYFRIGLSVSKKIGNAVVRNRIKRMIRQSITELKDEIDSGKDFVIIARKPCAEMTYEEVKKSLIHVFKRSGMKRIKK.

Belongs to the RnpA family. Consists of a catalytic RNA component (M1 or rnpB) and a protein subunit.

It carries out the reaction Endonucleolytic cleavage of RNA, removing 5'-extranucleotides from tRNA precursor.. Its function is as follows. RNaseP catalyzes the removal of the 5'-leader sequence from pre-tRNA to produce the mature 5'-terminus. It can also cleave other RNA substrates such as 4.5S RNA. The protein component plays an auxiliary but essential role in vivo by binding to the 5'-leader sequence and broadening the substrate specificity of the ribozyme. This chain is Ribonuclease P protein component, found in Bacillus cereus (strain 03BB102).